The sequence spans 457 residues: Multidrug resistance protein MdtK (457 aa).

12 helical membrane passes run 11–31 (LLALAIPVILAQIAQTAMGFV), 53–73 (IWLPAILFGHGLLLALTPVIA), 93–113 (WLAGFVSVLIMLVLWNAGYII), 127–147 (AVGYLRALLWGAPGYLFFQVA), 160–180 (GMVMGFIGLLVNIPVNYIFIY), 189–209 (GGVGCGVATAAVYWVMFLAMV), 243–263 (LPIALALFFEVTLFAVVALLV), 276–296 (IALNFSSLMFVLPMSLAAAVT), 314–334 (AARTGLMVGVCMATLTAIFTV), 350–370 (VVTLAAHLMLLAAVYQISDSI), 387–407 (IFYITFTAYWVLGLPSGYILA), and 418–438 (PAGFWIGFIIGLTSAAIMMML).

Belongs to the multi antimicrobial extrusion (MATE) (TC 2.A.66.1) family. MdtK subfamily.

The protein resides in the cell inner membrane. Its function is as follows. Multidrug efflux pump that functions probably as a Na(+)/drug antiporter. In Escherichia coli (strain SE11), this protein is Multidrug resistance protein MdtK.